The chain runs to 224 residues: Response regulator protein GraR (224 aa).

The Response regulatory domain maps to 2–115; the sequence is DILLVEDDMT…VLIAKLQAIY (114 aa). A 4-aspartylphosphate modification is found at Asp51. A DNA-binding region (ompR/PhoB-type) is located at residues 126–224; that stretch reads KRVLSWQDAI…KIGKGYMAHG (99 aa).

Post-translationally, phosphorylated by GraS.

Its subcellular location is the cytoplasm. In terms of biological role, member of the two-component regulatory system GraR/GraS involved in resistance against cationic antimicrobial peptides (CAMPs). This chain is Response regulator protein GraR (graR), found in Staphylococcus saprophyticus subsp. saprophyticus (strain ATCC 15305 / DSM 20229 / NCIMB 8711 / NCTC 7292 / S-41).